Here is a 211-residue protein sequence, read N- to C-terminus: Thiamine-phosphate synthase (211 aa).

Residues 37–41 (QLRIK) and asparagine 69 each bind 4-amino-2-methyl-5-(diphosphooxymethyl)pyrimidine. Mg(2+) is bound by residues aspartate 70 and aspartate 89. Position 108 (serine 108) interacts with 4-amino-2-methyl-5-(diphosphooxymethyl)pyrimidine. Residue 134 to 136 (TQT) coordinates 2-[(2R,5Z)-2-carboxy-4-methylthiazol-5(2H)-ylidene]ethyl phosphate. Residue lysine 137 coordinates 4-amino-2-methyl-5-(diphosphooxymethyl)pyrimidine. Residues glycine 166 and 186–187 (VS) each bind 2-[(2R,5Z)-2-carboxy-4-methylthiazol-5(2H)-ylidene]ethyl phosphate.

Belongs to the thiamine-phosphate synthase family. It depends on Mg(2+) as a cofactor.

It carries out the reaction 2-[(2R,5Z)-2-carboxy-4-methylthiazol-5(2H)-ylidene]ethyl phosphate + 4-amino-2-methyl-5-(diphosphooxymethyl)pyrimidine + 2 H(+) = thiamine phosphate + CO2 + diphosphate. The enzyme catalyses 2-(2-carboxy-4-methylthiazol-5-yl)ethyl phosphate + 4-amino-2-methyl-5-(diphosphooxymethyl)pyrimidine + 2 H(+) = thiamine phosphate + CO2 + diphosphate. It catalyses the reaction 4-methyl-5-(2-phosphooxyethyl)-thiazole + 4-amino-2-methyl-5-(diphosphooxymethyl)pyrimidine + H(+) = thiamine phosphate + diphosphate. Its pathway is cofactor biosynthesis; thiamine diphosphate biosynthesis; thiamine phosphate from 4-amino-2-methyl-5-diphosphomethylpyrimidine and 4-methyl-5-(2-phosphoethyl)-thiazole: step 1/1. Functionally, condenses 4-methyl-5-(beta-hydroxyethyl)thiazole monophosphate (THZ-P) and 2-methyl-4-amino-5-hydroxymethyl pyrimidine pyrophosphate (HMP-PP) to form thiamine monophosphate (TMP). The sequence is that of Thiamine-phosphate synthase from Salmonella typhimurium (strain LT2 / SGSC1412 / ATCC 700720).